The primary structure comprises 382 residues: Diphosphomevalonate decarboxylase ERG19 (382 aa).

(R)-5-diphosphomevalonate is bound by residues 22-25 (YWGK), arginine 78, 157-162 (SGSACR), and threonine 213.

The protein belongs to the diphosphomevalonate decarboxylase family. As to quaternary structure, homodimer.

The enzyme catalyses (R)-5-diphosphomevalonate + ATP = isopentenyl diphosphate + ADP + phosphate + CO2. The protein operates within isoprenoid biosynthesis; isopentenyl diphosphate biosynthesis via mevalonate pathway; isopentenyl diphosphate from (R)-mevalonate: step 3/3. In terms of biological role, diphosphomevalonate decarboxylase; part of the second module of ergosterol biosynthesis pathway that includes the middle steps of the pathway. MVD1 converts diphosphomevalonate into isopentenyl diphosphate. The second module is carried out in the vacuole and involves the formation of farnesyl diphosphate, which is also an important intermediate in the biosynthesis of ubiquinone, dolichol, heme and prenylated proteins. Activity by the mevalonate kinase ERG12 (FG05912) first converts mevalonate into 5-phosphomevalonate. 5-phosphomevalonate is then further converted to 5-diphosphomevalonate by the phosphomevalonate kinase ERG8 (FG09764). The diphosphomevalonate decarboxylase ERG19 (FG10424) then produces isopentenyl diphosphate. The isopentenyl-diphosphate delta-isomerase IDI1 (FG09722) then catalyzes the 1,3-allylic rearrangement of the homoallylic substrate isopentenyl (IPP) to its highly electrophilic allylic isomer, dimethylallyl diphosphate (DMAPP). Finally the farnesyl diphosphate synthase ERG20 (FG06784) catalyzes the sequential condensation of isopentenyl pyrophosphate with dimethylallyl pyrophosphate, and then with the resultant geranylpyrophosphate to the ultimate product farnesyl pyrophosphate. The protein is Diphosphomevalonate decarboxylase ERG19 of Gibberella zeae (strain ATCC MYA-4620 / CBS 123657 / FGSC 9075 / NRRL 31084 / PH-1) (Wheat head blight fungus).